The following is a 231-amino-acid chain: Homeobox protein EMX1 (231 aa).

Positions 133–192 (PKRIRTAFSPSQLLRLERAFEKNHYVVGAERKQLANSLSLSETQVKVWFQNRRTKYKRQK) form a DNA-binding region, homeobox. The interval 193–231 (LEEEGPECTQKKKGNHHINRWRIATKQTGSEDIDVMSDA) is disordered. Basic residues predominate over residues 203-212 (KKKGNHHINR).

The protein belongs to the EMX homeobox family.

The protein resides in the nucleus. Its function is as follows. May function in combinations with OTX1/2 to specify cell fates in the developing central nervous system. This Danio rerio (Zebrafish) protein is Homeobox protein EMX1 (emx1).